Here is a 428-residue protein sequence, read N- to C-terminus: Sporulation kinase C (428 aa).

2 consecutive transmembrane segments (helical) span residues 8-28 (IISI…FYFI) and 36-56 (PVDI…AYYI). One can recognise a PAS domain in the interval 76–147 (LSEEKNRIMD…NTQIQNKASS (72 aa)). One can recognise a PAC domain in the interval 148 to 200 (GMFTAKYVTKNGTIFWGEVHYKLYYDRDDQFTGSLGTMSDITERKEAEDELIE). Residues 221-426 (GIAHEVRNPL…VFQVVLPLKS (206 aa)) enclose the Histidine kinase domain. His224 is subject to Phosphohistidine; by autocatalysis.

In terms of assembly, oligomerizes, probably forms homodimers; oligomerization is assisted by FloT. Interacts with FloT. Another study shows only rare colocalization with FloT or FloA membrane assemblies. KinC membrane assemblies are more mobile than FloT membrane assemblies.

Its subcellular location is the cell membrane. The protein localises to the membrane raft. It catalyses the reaction ATP + protein L-histidine = ADP + protein N-phospho-L-histidine.. In terms of biological role, phosphorylates the sporulation-regulatory protein Spo0A a transcription factor that also controls biofilm formation. Requires FloT and FloA for localization to DRMs and for activity. This is Sporulation kinase C from Bacillus subtilis (strain 168).